We begin with the raw amino-acid sequence, 559 residues long: Potassium-transporting ATPase potassium-binding subunit (559 aa).

A run of 12 helical transmembrane segments spans residues 5 to 25, 63 to 83, 132 to 152, 170 to 190, 250 to 270, 283 to 303, 329 to 349, 356 to 376, 379 to 399, 416 to 436, 484 to 504, and 524 to 544; these read GFLL…PLGV, LLAI…MLLG, GLTV…FALI, LVRI…LLFI, LTNM…CFAF, LLWA…SAEV, VLVS…AVIA, ALGG…FGGV, GLYG…LMIG, MTAL…ALAM, LLAF…MAIA, and GALF…LTFI.

Belongs to the KdpA family. As to quaternary structure, the system is composed of three essential subunits: KdpA, KdpB and KdpC.

It localises to the cell inner membrane. Functionally, part of the high-affinity ATP-driven potassium transport (or Kdp) system, which catalyzes the hydrolysis of ATP coupled with the electrogenic transport of potassium into the cytoplasm. This subunit binds the periplasmic potassium ions and delivers the ions to the membrane domain of KdpB through an intramembrane tunnel. The chain is Potassium-transporting ATPase potassium-binding subunit from Citrobacter koseri (strain ATCC BAA-895 / CDC 4225-83 / SGSC4696).